A 145-amino-acid polypeptide reads, in one-letter code: Aminoglycoside N(6')-acetyltransferase type 1 (145 aa).

One can recognise an N-acetyltransferase domain in the interval 1 to 145 (MNIKPASEAS…KVVYFSKKID (145 aa)). Residues Trp-22, Tyr-65, and Glu-78 each coordinate substrate. 80–82 (IYV) contacts acetyl-CoA. Asp-114 lines the substrate pocket. Asn-119 is an acetyl-CoA binding site. Glu-135 provides a ligand contact to substrate.

In terms of assembly, homodimer.

The catalysed reaction is kanamycin B + acetyl-CoA = N(6')-acetylkanamycin B + CoA + H(+). In terms of biological role, catalyzes the transfer of an acetyl group from acetyl-CoA to the 6'-amino group of aminoglycoside molecules conferring resistance to antibiotics containing the purpurosamine ring including amikacin, kanamycin, tobramycin and netilmicin. In Acinetobacter haemolyticus, this protein is Aminoglycoside N(6')-acetyltransferase type 1.